The sequence spans 310 residues: Fructose-bisphosphate aldolase/6-deoxy-5-ketofructose 1-phosphate synthase (310 aa).

Substrate is bound by residues 48–49, His53, Asp57, and Trp180; that span reads DQ. The active-site Proton donor is Tyr182. Substrate contacts are provided by residues Arg184, 213-215, 241-243, and 270-271; these read KVN, AGG, and GR. Lys213 serves as the catalytic Schiff-base intermediate with dihydroxyacetone-P. The Schiff-base intermediate with substrate role is filled by Lys213.

This sequence belongs to the DeoC/FbaB aldolase family.

It catalyses the reaction beta-D-fructose 1,6-bisphosphate = D-glyceraldehyde 3-phosphate + dihydroxyacetone phosphate. The enzyme catalyses beta-D-fructose 1,6-bisphosphate + methylglyoxal = 1-deoxy-D-threo-hexo-2,5-diulose 6-phosphate + D-glyceraldehyde 3-phosphate. It carries out the reaction beta-D-fructose 1-phosphate + methylglyoxal = 1-deoxy-D-threo-hexo-2,5-diulose 6-phosphate + D-glyceraldehyde. It participates in aromatic compound metabolism. In terms of biological role, catalyzes the transaldolization of either fructose-1-P or fructose-1,6-bisphosphate with methylglyoxal to produce 6-deoxy-5-ketofructose-1-phosphate (DKFP). Also catalyzes the reversible aldol condensation of dihydroxyacetone phosphate (DHAP or glycerone-phosphate) with glyceraldehyde 3-phosphate (G3P or GAP) to produce fructose 1,6-bisphosphate (FBP). This Methanocaldococcus jannaschii (strain ATCC 43067 / DSM 2661 / JAL-1 / JCM 10045 / NBRC 100440) (Methanococcus jannaschii) protein is Fructose-bisphosphate aldolase/6-deoxy-5-ketofructose 1-phosphate synthase.